The sequence spans 604 residues: ATP-dependent RNA helicase DED1 (604 aa).

Positions 1 to 19 are enriched in polar residues; the sequence is MAELSEQVQNLSINDNNEN. Positions 1–55 are disordered; the sequence is MAELSEQVQNLSINDNNENGYVPPHLRGKPRSARNNSSNYNNNNGGYNGGRGGGS. A2 is modified (N-acetylalanine). The segment covering 34–45 has biased composition (low complexity); it reads RNNSSNYNNNNG. Positions 46-55 are enriched in gly residues; it reads GYNGGRGGGS. R51 carries the post-translational modification Omega-N-methylarginine. R62 carries the post-translational modification Dimethylated arginine; alternate. R62 carries the omega-N-methylarginine; alternate modification. Residues 67-76 are compositionally biased toward gly residues; sequence NGGFFGGNNG. The interval 67-94 is disordered; the sequence is NGGFFGGNNGGSRSNGRSGGRWIDGKHV. The short motif at 142–170 is the Q motif element; sequence TEFTSPPLDGLLLENIKLARFTKPTPVQK. A Glycyl lysine isopeptide (Lys-Gly) (interchain with G-Cter in ubiquitin) cross-link involves residue K158. Residues 173–362 enclose the Helicase ATP-binding domain; sequence VPIVANGRDL…RDFLSDYIFL (190 aa). 186-193 contacts ATP; that stretch reads AQTGSGKT. 3 positions are modified to phosphoserine: S215, S218, and S263. Positions 306–309 match the DEAD box motif; it reads DEAD. One can recognise a Helicase C-terminal domain in the interval 373 to 533; the sequence is NITQKVLYVE…EVPSFLKDAM (161 aa). The segment at 533-604 is disordered; sequence MMSAPGSRSN…SGGSNNSSWW (72 aa). S535, S539, and S543 each carry phosphoserine. Position 545 is a dimethylated arginine; alternate (R545). Residue R545 is modified to Omega-N-methylarginine; alternate. Residues S572 and S576 each carry the phosphoserine modification. An Omega-N-methylarginine modification is found at R578. The segment covering 584-604 has biased composition (low complexity); sequence GSDSKSSGWGNSGGSNNSSWW. S598 is subject to Phosphoserine.

The protein belongs to the DEAD box helicase family. DDX3/DED1 subfamily. Interacts with the L-A virus GAG protein and the whole L-A virus particles.

The protein resides in the cytoplasm. The enzyme catalyses ATP + H2O = ADP + phosphate + H(+). Functionally, ATP-binding RNA helicase involved in translation initiation. Remodels RNA in response to ADP and ATP concentrations by facilitating disruption, but also formation of RNA duplexes. Has weak ATP-dependent affinity for dsRNA, but strong ATP-dependent affinity for ssRNA. Acts as a virus host factor involved in the replication of the MBV and the L-A viruses by promoting the negative-strand RNA synthesis. May be involved in recognition of the preinitiation complex and DNA binding of the RNA polymerase III and play a role in mRNA splicing. This chain is ATP-dependent RNA helicase DED1, found in Saccharomyces cerevisiae (strain ATCC 204508 / S288c) (Baker's yeast).